A 505-amino-acid polypeptide reads, in one-letter code: MTSKPHSDWIPYSVLDDEGSNLRQQKLDRQRALLEQKQKKKRQEPLMVQANADGRPRSRRARQSEEQAPLVESYLSSSGSTSYQVQEADSLASVQPGATRPPAPASAKKTKGAAASGGQGGAPRKEKKGKHKGTSGPATLAEDKSEAQGPVQILTVGQSDHAKDAGETAAGGGAQPSGQDLRATMQRKGISSSMSFDEEEDEDENSSSSSQLNSNTRPSSATSRKSTREAASAPSPAAPEPPVDIEVQDLEEFALRPAPQGITIKCRITRDKKGMDRGMYPTYFLHLDREDGKKVFLLAGRKRKKSKTSNYLISVDPTDLSRGGDSYIGKLRSNLMGTKFTVYDNGVNPQKASSSTLESGTLRQELAAVCYETNVLGFKGPRKMSVIVPGMNMVHERVCIRPRNEHETLLARWQNKNTESIIELQNKTPVWNDDTQSYVLNFHGRVTQASVKNFQIIHGNDPDYIVMQFGRVAEDVFTMDYNYPLCALQAFAIALSSFDSKLACE.

The segment at 35–243 (EQKQKKKRQE…PSPAAPEPPV (209 aa)) is disordered. Positions 70–87 (LVESYLSSSGSTSYQVQE) are enriched in low complexity. Positions 196-205 (FDEEEDEDEN) are enriched in acidic residues. Residues 206–220 (SSSSSQLNSNTRPSS) are compositionally biased toward low complexity.

This sequence belongs to the TUB family. In terms of assembly, interacts with GNAQ. Interacts with TULP1.

It is found in the cytoplasm. The protein localises to the nucleus. The protein resides in the secreted. It localises to the cell membrane. Its function is as follows. Functions in signal transduction from heterotrimeric G protein-coupled receptors. Binds to membranes containing phosphatidylinositol 4,5-bisphosphate. Can bind DNA (in vitro). May contribute to the regulation of transcription in the nucleus. Could be involved in the hypothalamic regulation of body weight. Contribute to stimulation of phagocytosis of apoptotic retinal pigment epithelium (RPE) cells and macrophages. In Rattus norvegicus (Rat), this protein is Tubby protein homolog (Tub).